Here is a 448-residue protein sequence, read N- to C-terminus: F-box/FBD/LRR-repeat protein At2g04230 (448 aa).

Residues E12 to V64 enclose the F-box domain. 7 LRR repeats span residues P72 to F98, I149 to Q176, V177 to R202, S204 to D225, L226 to G251, I271 to L296, and T319 to D345. Residues K359–T410 form the FBD domain.

The polypeptide is F-box/FBD/LRR-repeat protein At2g04230 (Arabidopsis thaliana (Mouse-ear cress)).